A 309-amino-acid chain; its full sequence is tRNA pseudouridine synthase B (309 aa).

D52 functions as the Nucleophile in the catalytic mechanism.

Belongs to the pseudouridine synthase TruB family. Type 1 subfamily.

The enzyme catalyses uridine(55) in tRNA = pseudouridine(55) in tRNA. Functionally, responsible for synthesis of pseudouridine from uracil-55 in the psi GC loop of transfer RNAs. The sequence is that of tRNA pseudouridine synthase B from Leptospira interrogans serogroup Icterohaemorrhagiae serovar Lai (strain 56601).